A 207-amino-acid polypeptide reads, in one-letter code: Small ribosomal subunit protein uS4 (207 aa).

Positions 97–160 (SRLDNVVYRM…KKQARIVEAL (64 aa)) constitute an S4 RNA-binding domain.

This sequence belongs to the universal ribosomal protein uS4 family. Part of the 30S ribosomal subunit. Contacts protein S5. The interaction surface between S4 and S5 is involved in control of translational fidelity.

One of the primary rRNA binding proteins, it binds directly to 16S rRNA where it nucleates assembly of the body of the 30S subunit. In terms of biological role, with S5 and S12 plays an important role in translational accuracy. This Burkholderia pseudomallei (strain 1106a) protein is Small ribosomal subunit protein uS4.